Here is a 119-residue protein sequence, read N- to C-terminus: UPF0145 protein Ta0182 (119 aa).

The protein belongs to the UPF0145 family.

In Thermoplasma acidophilum (strain ATCC 25905 / DSM 1728 / JCM 9062 / NBRC 15155 / AMRC-C165), this protein is UPF0145 protein Ta0182.